The primary structure comprises 215 residues: Cytochrome b6 (215 aa).

The chain crosses the membrane as a helical span at residues Ile-32–Phe-52. Cys-35 contacts heme c. Positions 86 and 100 each coordinate heme b. A run of 3 helical transmembrane segments spans residues Ala-90–Phe-110, Leu-116–Tyr-136, and Ala-186–Ile-206. His-187 and His-202 together coordinate heme b.

This sequence belongs to the cytochrome b family. PetB subfamily. In terms of assembly, the 4 large subunits of the cytochrome b6-f complex are cytochrome b6, subunit IV (17 kDa polypeptide, PetD), cytochrome f and the Rieske protein, while the 4 small subunits are PetG, PetL, PetM and PetN. The complex functions as a dimer. The cofactor is heme b. Heme c serves as cofactor.

The protein resides in the plastid. The protein localises to the chloroplast thylakoid membrane. Its function is as follows. Component of the cytochrome b6-f complex, which mediates electron transfer between photosystem II (PSII) and photosystem I (PSI), cyclic electron flow around PSI, and state transitions. The chain is Cytochrome b6 from Emiliania huxleyi (Coccolithophore).